Here is a 113-residue protein sequence, read N- to C-terminus: Hydrogenase maturation factor HypA 1 (113 aa).

His-2 contributes to the Ni(2+) binding site. Residues Cys-73, Cys-76, Cys-89, and Cys-92 each contribute to the Zn(2+) site.

It belongs to the HypA/HybF family.

Its function is as follows. Involved in the maturation of [NiFe] hydrogenases. Required for nickel insertion into the metal center of the hydrogenase. This is Hydrogenase maturation factor HypA 1 from Bradyrhizobium diazoefficiens (strain JCM 10833 / BCRC 13528 / IAM 13628 / NBRC 14792 / USDA 110).